The primary structure comprises 199 residues: Transcriptional regulatory protein EntR (199 aa).

Positions 3–124 (KILVIDRCHF…TLSHTIQEAL (122 aa)) constitute a Response regulatory domain. Position 8 is a 4-aspartylphosphate (Asp-8). The region spanning 133-198 (PKNATPLLTP…SPFLSLPGKG (66 aa)) is the HTH luxR-type domain. A DNA-binding region (H-T-H motif) is located at residues 157-176 (NNAIAAALSIHGKTVYTYKR).

Its function is as follows. May serve to repress the entericidin locus in C.freundii. The sequence is that of Transcriptional regulatory protein EntR (ecnR) from Citrobacter freundii.